Reading from the N-terminus, the 892-residue chain is UPF0182 protein MCA2716 (892 aa).

The next 7 membrane-spanning stretches (helical) occupy residues 7–27, 57–77, 107–127, 163–183, 206–226, 252–272, and 281–301; these read LLTSAAVVMVVLAGLLLAIVL, ILSGGVTLFFFLIFFLNFWAA, GALPVYLPLSVFLAVLVALPF, ILVLIQSELLVCASVLAVMVA, IHLNLLVVLVAVVAAWGYVLQ, LPLIWVEIVSLVVGVVAALWF, and LALTCALVWVSAAALRKIDVV.

It belongs to the UPF0182 family.

It localises to the cell membrane. This Methylococcus capsulatus (strain ATCC 33009 / NCIMB 11132 / Bath) protein is UPF0182 protein MCA2716.